The following is a 73-amino-acid chain: MNFLCILFVVSLISSLSKCTTSSMKRELDLGMSRGHSGSQVGKALLGIQSANRTDGPGRKRRSFDLYALVNAK.

Residues 1 to 19 (MNFLCILFVVSLISSLSKC) form the signal peptide. Pro57 bears the Proline amide mark. Positions 61-73 (RRSFDLYALVNAK) are excised as a propeptide.

It belongs to the diuretic hormone class 2 family. Expressed by the venom gland.

Its subcellular location is the secreted. Functionally, regulates fluid secretion. In Lychas mucronatus (Chinese swimming scorpion), this protein is Venom protein 55.1.